Here is a 376-residue protein sequence, read N- to C-terminus: Beta-centractin (376 aa).

Methionine 1 is subject to N-acetylmethionine. The residue at position 4 (tyrosine 4) is a 3'-nitrotyrosine.

The protein belongs to the actin family. ARP1 subfamily.

The protein resides in the cytoplasm. The protein localises to the cytoskeleton. It localises to the microtubule organizing center. Its subcellular location is the centrosome. Its function is as follows. Component of a multi-subunit complex involved in microtubule based vesicle motility. It is associated with the centrosome. The sequence is that of Beta-centractin (ACTR1B) from Homo sapiens (Human).